Consider the following 183-residue polypeptide: Ras-like protein (183 aa).

10-17 contacts GTP; that stretch reads GAGGVGKS. The Effector region signature appears at 32–40; the sequence is YDPTIEDSY. GTP contacts are provided by residues 57-61 and 116-119; these read DTAGQ and NKCD.

This sequence belongs to the small GTPase superfamily. Ras family.

It is found in the cell membrane. The catalysed reaction is GTP + H2O = GDP + phosphate + H(+). Alternates between an inactive form bound to GDP and an active form bound to GTP. Activated by a guanine nucleotide-exchange factor (GEF) and inactivated by a GTPase-activating protein (GAP). Its function is as follows. Ras proteins bind GDP/GTP and possess intrinsic GTPase activity. This chain is Ras-like protein, found in Carassius auratus (Goldfish).